A 348-amino-acid polypeptide reads, in one-letter code: GTPase Obg (348 aa).

The Obg domain occupies 1–159 (MKFVDEVKVH…RELVLELKLM (159 aa)). Residues 160–331 (ADVGLVGLPN…LLSALVRILS (172 aa)) enclose the OBG-type G domain. Residues 166–173 (GLPNAGKS), 191–195 (FTTLI), 213–216 (DIPG), 283–286 (NKVD), and 312–314 (SAR) each bind GTP. Residues Ser173 and Thr193 each coordinate Mg(2+).

The protein belongs to the TRAFAC class OBG-HflX-like GTPase superfamily. OBG GTPase family. In terms of assembly, monomer. Requires Mg(2+) as cofactor.

It is found in the cytoplasm. An essential GTPase which binds GTP, GDP and possibly (p)ppGpp with moderate affinity, with high nucleotide exchange rates and a fairly low GTP hydrolysis rate. Plays a role in control of the cell cycle, stress response, ribosome biogenesis and in those bacteria that undergo differentiation, in morphogenesis control. The sequence is that of GTPase Obg from Syntrophobacter fumaroxidans (strain DSM 10017 / MPOB).